We begin with the raw amino-acid sequence, 141 residues long: ATP synthase epsilon chain (141 aa).

Belongs to the ATPase epsilon chain family. F-type ATPases have 2 components, CF(1) - the catalytic core - and CF(0) - the membrane proton channel. CF(1) has five subunits: alpha(3), beta(3), gamma(1), delta(1), epsilon(1). CF(0) has three main subunits: a, b and c.

The protein resides in the cell inner membrane. Its function is as follows. Produces ATP from ADP in the presence of a proton gradient across the membrane. This is ATP synthase epsilon chain (atpC) from Acidithiobacillus ferridurans.